Here is a 245-residue protein sequence, read N- to C-terminus: NAD-dependent protein deacylase (245 aa).

One can recognise a Deacetylase sirtuin-type domain in the interval 1–237 (MNFPYRNIVV…PKLVEELLAH (237 aa)). 13–32 (GAGISAESGIQTFRAQDGLW) contributes to the NAD(+) binding site. Residues Y57 and R60 each coordinate substrate. 94–97 (QNID) is a binding site for NAD(+). H112 acts as the Proton acceptor in catalysis. Residues C120 and C139 each contribute to the Zn(2+) site. NAD(+)-binding positions include 179 to 181 (GTS), 205 to 207 (NLE), and A223.

The protein belongs to the sirtuin family. Class III subfamily. The cofactor is Zn(2+).

It localises to the cytoplasm. It carries out the reaction N(6)-acetyl-L-lysyl-[protein] + NAD(+) + H2O = 2''-O-acetyl-ADP-D-ribose + nicotinamide + L-lysyl-[protein]. The enzyme catalyses N(6)-succinyl-L-lysyl-[protein] + NAD(+) + H2O = 2''-O-succinyl-ADP-D-ribose + nicotinamide + L-lysyl-[protein]. NAD-dependent lysine deacetylase and desuccinylase that specifically removes acetyl and succinyl groups on target proteins. Modulates the activities of several proteins which are inactive in their acylated form. In Vibrio vulnificus (strain CMCP6), this protein is NAD-dependent protein deacylase.